A 116-amino-acid chain; its full sequence is Large ribosomal subunit protein uL18 (116 aa).

It belongs to the universal ribosomal protein uL18 family. As to quaternary structure, part of the 50S ribosomal subunit; part of the 5S rRNA/L5/L18/L25 subcomplex. Contacts the 5S and 23S rRNAs.

This is one of the proteins that bind and probably mediate the attachment of the 5S RNA into the large ribosomal subunit, where it forms part of the central protuberance. This chain is Large ribosomal subunit protein uL18, found in Chromohalobacter salexigens (strain ATCC BAA-138 / DSM 3043 / CIP 106854 / NCIMB 13768 / 1H11).